A 200-amino-acid chain; its full sequence is Putative vacuolar protein sorting-associated protein 24 homolog 2 (200 aa).

Residues threonine 2 to aspartate 23 adopt a coiled-coil conformation.

It belongs to the SNF7 family. Component of the endosomal sorting required for transport complex III (ESCRT-III), composed at least of VPS2, VPS20, VPS24 and VPS32.

It is found in the endosome. Functionally, component of the ESCRT-III complex, which is required for multivesicular bodies (MVBs) formation and sorting of endosomal cargo proteins into MVBs. The ESCRT-III complex is probably involved in the concentration of MVB cargo. In Arabidopsis thaliana (Mouse-ear cress), this protein is Putative vacuolar protein sorting-associated protein 24 homolog 2 (VPS24-2).